A 27-amino-acid polypeptide reads, in one-letter code: Delta-actitoxin-Avd2a (27 aa).

Cystine bridges form between C3-C17, C4-C11, and C6-C22.

It belongs to the sea anemone short toxin (type III) family.

The protein localises to the secreted. Its subcellular location is the nematocyst. Functionally, specific arthropod (crab and insect) toxin that inhibits inactivation of voltage-gated sodium channels. It competes well with the site-3 toxin LqhalphaIT (from the scorpion L.quinquestriatus (AC P17728)) on binding to cockroach neuronal membranes (Ki=21.4 nM), and inhibits the inactivation of D.melanogaster channel (DmNav1), but not that of mammalian Navs expressed in Xenopus oocytes. Its activity is synergically enhanced by ligands of receptor site-4 (Bj-xtrIT (AC P56637)). Its ability to inhibit the channel mutant DmNav1[D1701R] only decreases 5-fold, whereas the inhibition activity is completely lost by LqhalphaIT and Av2 when tested on DmNav1[D1701R]. This Anemonia sulcata (Mediterranean snakelocks sea anemone) protein is Delta-actitoxin-Avd2a.